The sequence spans 1034 residues: Enteropeptidase (1034 aa).

The propeptide occupies methionine 1–alanine 51. Residues glycine 2 to glutamate 18 lie on the Cytoplasmic side of the membrane. Residues valine 19 to glutamate 47 traverse the membrane as a helical; Signal-anchor for type II membrane protein segment. Residues lysine 48–histidine 1034 lie on the Extracellular side of the membrane. An SEA domain is found at lysine 54 to glutamate 169. 4 N-linked (GlcNAc...) asparagine glycosylation sites follow: asparagine 116, asparagine 147, asparagine 170, and asparagine 194. The LDL-receptor class A 1 domain occupies isoleucine 197–threonine 238. Cystine bridges form between cysteine 199-cysteine 212, cysteine 206-cysteine 225, cysteine 219-cysteine 236, and cysteine 240-cysteine 268. The CUB 1 domain maps to cysteine 240–phenylalanine 349. Asparagine 283, asparagine 343, asparagine 350, asparagine 403, asparagine 455, asparagine 485, asparagine 518, asparagine 549, and asparagine 645 each carry an N-linked (GlcNAc...) asparagine glycan. Residues aspartate 357 to valine 519 enclose the MAM domain. Residues cysteine 539 and cysteine 567 are joined by a disulfide bond. The region spanning cysteine 539–glycine 649 is the CUB 2 domain. The region spanning glutamate 656–arginine 694 is the LDL-receptor class A 2 domain. Intrachain disulfides connect cysteine 658-cysteine 670, cysteine 665-cysteine 683, and cysteine 677-cysteine 692. In terms of domain architecture, SRCR spans valine 693–serine 786. 5 N-linked (GlcNAc...) asparagine glycosylation sites follow: asparagine 697, asparagine 701, asparagine 721, asparagine 740, and asparagine 761. Intrachain disulfides connect cysteine 772-cysteine 782, cysteine 787-cysteine 911, cysteine 825-cysteine 841, cysteine 925-cysteine 992, cysteine 956-cysteine 971, and cysteine 982-cysteine 1010. Positions isoleucine 800 to histidine 1034 constitute a Peptidase S1 domain. An N-linked (GlcNAc...) asparagine glycan is attached at asparagine 804. The active-site Charge relay system is histidine 840. Residue asparagine 863 is glycosylated (N-linked (GlcNAc...) asparagine). Aspartate 891 (charge relay system) is an active-site residue. Asparagine 902 and asparagine 964 each carry an N-linked (GlcNAc...) asparagine glycan. Serine 986 acts as the Charge relay system in catalysis.

It belongs to the peptidase S1 family. As to quaternary structure, heterotrimer of a catalytic (light) chain, a multidomain (heavy) chain, and a mini chain. The chains are derived from a single precursor that is cleaved by a trypsin-like protease. In terms of processing, the mini chain may be cleaved by elastase.

It is found in the membrane. The catalysed reaction is Activation of trypsinogen by selective cleavage of 6-Lys-|-Ile-7 bond.. In terms of biological role, responsible for initiating activation of pancreatic proteolytic proenzymes (trypsin, chymotrypsin and carboxypeptidase A). It catalyzes the conversion of trypsinogen to trypsin which in turn activates other proenzymes including chymotrypsinogen, procarboxypeptidases, and proelastases. This chain is Enteropeptidase (TMPRSS15), found in Sus scrofa (Pig).